A 286-amino-acid polypeptide reads, in one-letter code: Protease HtpX homolog (286 aa).

A run of 2 helical transmembrane segments spans residues Thr-7–Gly-27 and Ser-29–Ser-49. His-131 provides a ligand contact to Zn(2+). The active site involves Glu-132. Position 135 (His-135) interacts with Zn(2+). Helical transmembrane passes span Ile-146–Gly-166 and Ile-177–Ile-197. A Zn(2+)-binding site is contributed by Glu-202.

This sequence belongs to the peptidase M48B family. Zn(2+) is required as a cofactor.

The protein resides in the cell inner membrane. The protein is Protease HtpX homolog of Ralstonia pickettii (strain 12J).